We begin with the raw amino-acid sequence, 714 residues long: Fatty acid oxidation complex subunit alpha (714 aa).

The tract at residues 1-190 (MEMASVFTLN…KLGLVDDVVP (190 aa)) is enoyl-CoA hydratase. Residues 306–714 (APLNSVGILG…FWKTTATDLQ (409 aa)) are 3-hydroxyacyl-CoA dehydrogenase.

The protein in the N-terminal section; belongs to the enoyl-CoA hydratase/isomerase family. In the central section; belongs to the 3-hydroxyacyl-CoA dehydrogenase family. As to quaternary structure, heterotetramer of two alpha chains (FadJ) and two beta chains (FadI).

It is found in the cytoplasm. The enzyme catalyses a (3S)-3-hydroxyacyl-CoA = a (2E)-enoyl-CoA + H2O. It carries out the reaction a 4-saturated-(3S)-3-hydroxyacyl-CoA = a (3E)-enoyl-CoA + H2O. It catalyses the reaction a (3S)-3-hydroxyacyl-CoA + NAD(+) = a 3-oxoacyl-CoA + NADH + H(+). The catalysed reaction is (3S)-3-hydroxybutanoyl-CoA = (3R)-3-hydroxybutanoyl-CoA. The protein operates within lipid metabolism; fatty acid beta-oxidation. Functionally, catalyzes the formation of a hydroxyacyl-CoA by addition of water on enoyl-CoA. Also exhibits 3-hydroxyacyl-CoA epimerase and 3-hydroxyacyl-CoA dehydrogenase activities. In Escherichia coli (strain SE11), this protein is Fatty acid oxidation complex subunit alpha.